Here is a 482-residue protein sequence, read N- to C-terminus: tRNA(Ile)-lysidine synthase (482 aa).

Position 28 to 33 (28 to 33 (SGGPDS)) interacts with ATP.

It belongs to the tRNA(Ile)-lysidine synthase family.

The protein resides in the cytoplasm. The catalysed reaction is cytidine(34) in tRNA(Ile2) + L-lysine + ATP = lysidine(34) in tRNA(Ile2) + AMP + diphosphate + H(+). Functionally, ligates lysine onto the cytidine present at position 34 of the AUA codon-specific tRNA(Ile) that contains the anticodon CAU, in an ATP-dependent manner. Cytidine is converted to lysidine, thus changing the amino acid specificity of the tRNA from methionine to isoleucine. This is tRNA(Ile)-lysidine synthase from Symbiobacterium thermophilum (strain DSM 24528 / JCM 14929 / IAM 14863 / T).